Consider the following 126-residue polypeptide: Holo-[acyl-carrier-protein] synthase (126 aa).

D9 and E58 together coordinate Mg(2+).

The protein belongs to the P-Pant transferase superfamily. AcpS family. Requires Mg(2+) as cofactor.

Its subcellular location is the cytoplasm. It catalyses the reaction apo-[ACP] + CoA = holo-[ACP] + adenosine 3',5'-bisphosphate + H(+). Transfers the 4'-phosphopantetheine moiety from coenzyme A to a Ser of acyl-carrier-protein. In Yersinia pestis bv. Antiqua (strain Angola), this protein is Holo-[acyl-carrier-protein] synthase.